Reading from the N-terminus, the 332-residue chain is 4-hydroxy-3-methylbut-2-enyl diphosphate reductase (332 aa).

A [4Fe-4S] cluster-binding site is contributed by C34. Residues H63 and H96 each contribute to the (2E)-4-hydroxy-3-methylbut-2-enyl diphosphate site. Residues H63 and H96 each coordinate dimethylallyl diphosphate. H63 and H96 together coordinate isopentenyl diphosphate. Residue C118 coordinates [4Fe-4S] cluster. (2E)-4-hydroxy-3-methylbut-2-enyl diphosphate is bound at residue H146. Dimethylallyl diphosphate is bound at residue H146. Residue H146 coordinates isopentenyl diphosphate. Residue E148 is the Proton donor of the active site. T186 contacts (2E)-4-hydroxy-3-methylbut-2-enyl diphosphate. C216 contacts [4Fe-4S] cluster. S244, S245, N246, and S289 together coordinate (2E)-4-hydroxy-3-methylbut-2-enyl diphosphate. The dimethylallyl diphosphate site is built by S244, S245, N246, and S289. Positions 244, 245, 246, and 289 each coordinate isopentenyl diphosphate.

The protein belongs to the IspH family. The cofactor is [4Fe-4S] cluster.

It catalyses the reaction isopentenyl diphosphate + 2 oxidized [2Fe-2S]-[ferredoxin] + H2O = (2E)-4-hydroxy-3-methylbut-2-enyl diphosphate + 2 reduced [2Fe-2S]-[ferredoxin] + 2 H(+). The enzyme catalyses dimethylallyl diphosphate + 2 oxidized [2Fe-2S]-[ferredoxin] + H2O = (2E)-4-hydroxy-3-methylbut-2-enyl diphosphate + 2 reduced [2Fe-2S]-[ferredoxin] + 2 H(+). It participates in isoprenoid biosynthesis; dimethylallyl diphosphate biosynthesis; dimethylallyl diphosphate from (2E)-4-hydroxy-3-methylbutenyl diphosphate: step 1/1. It functions in the pathway isoprenoid biosynthesis; isopentenyl diphosphate biosynthesis via DXP pathway; isopentenyl diphosphate from 1-deoxy-D-xylulose 5-phosphate: step 6/6. Its function is as follows. Catalyzes the conversion of 1-hydroxy-2-methyl-2-(E)-butenyl 4-diphosphate (HMBPP) into a mixture of isopentenyl diphosphate (IPP) and dimethylallyl diphosphate (DMAPP). Acts in the terminal step of the DOXP/MEP pathway for isoprenoid precursor biosynthesis. This Mycolicibacterium paratuberculosis (strain ATCC BAA-968 / K-10) (Mycobacterium paratuberculosis) protein is 4-hydroxy-3-methylbut-2-enyl diphosphate reductase.